Reading from the N-terminus, the 225-residue chain is Putative 5'-nucleotidase alr3139 (225 aa).

A divalent metal cation-binding residues include Asp-8, Asp-9, Ser-37, and Asn-88.

Belongs to the SurE nucleotidase family. A divalent metal cation serves as cofactor.

The protein localises to the cytoplasm. The enzyme catalyses a ribonucleoside 5'-phosphate + H2O = a ribonucleoside + phosphate. Functionally, nucleotidase that shows phosphatase activity on nucleoside 5'-monophosphates. This chain is Putative 5'-nucleotidase alr3139, found in Synechocystis sp. (strain ATCC 27184 / PCC 6803 / Kazusa).